The following is a 140-amino-acid chain: 3-hydroxyacyl-[acyl-carrier-protein] dehydratase FabZ (140 aa).

Residue His48 is part of the active site.

This sequence belongs to the thioester dehydratase family. FabZ subfamily.

Its subcellular location is the cytoplasm. The enzyme catalyses a (3R)-hydroxyacyl-[ACP] = a (2E)-enoyl-[ACP] + H2O. In terms of biological role, involved in unsaturated fatty acids biosynthesis. Catalyzes the dehydration of short chain beta-hydroxyacyl-ACPs and long chain saturated and unsaturated beta-hydroxyacyl-ACPs. This Oceanobacillus iheyensis (strain DSM 14371 / CIP 107618 / JCM 11309 / KCTC 3954 / HTE831) protein is 3-hydroxyacyl-[acyl-carrier-protein] dehydratase FabZ.